The following is a 604-amino-acid chain: ATP-dependent RNA helicase DED1 (604 aa).

The segment covering 1 to 19 (MAELSEQVQNLSINDNNEN) has biased composition (polar residues). Residues 1-55 (MAELSEQVQNLSINDNNENGYVPPHLRGKPRSARNNSSNYNNNNGGYNGGRGGGS) are disordered. The residue at position 2 (Ala-2) is an N-acetylalanine. The segment covering 34 to 45 (RNNSSNYNNNNG) has biased composition (low complexity). Residues 46–55 (GYNGGRGGGS) are compositionally biased toward gly residues. Arg-51 bears the Omega-N-methylarginine mark. At Arg-62 the chain carries Dimethylated arginine; alternate. Omega-N-methylarginine; alternate is present on Arg-62. The span at 67–76 (NGGFFGGNNG) shows a compositional bias: gly residues. Residues 67–94 (NGGFFGGNNGGSRSNGRSGGRWIDGKHV) are disordered. The Q motif signature appears at 142–170 (TEFTSPPLDGLLLENIKLARFTKPTPVQK). Residue Lys-158 forms a Glycyl lysine isopeptide (Lys-Gly) (interchain with G-Cter in ubiquitin) linkage. Positions 173–362 (VPIVANGRDL…RDFLSDYIFL (190 aa)) constitute a Helicase ATP-binding domain. 186–193 (AQTGSGKT) contributes to the ATP binding site. Phosphoserine occurs at positions 215, 218, and 263. Positions 306–309 (DEAD) match the DEAD box motif. The 161-residue stretch at 373-533 (NITQKVLYVE…EVPSFLKDAM (161 aa)) folds into the Helicase C-terminal domain. Positions 533–604 (MMSAPGSRSN…SGGSNNSSWW (72 aa)) are disordered. Ser-535, Ser-539, and Ser-543 each carry phosphoserine. Arg-545 is modified (dimethylated arginine; alternate). Arg-545 carries the omega-N-methylarginine; alternate modification. 2 positions are modified to phosphoserine: Ser-572 and Ser-576. Position 578 is an omega-N-methylarginine (Arg-578). The span at 584–604 (GSDSKSSGWGNSGGSNNSSWW) shows a compositional bias: low complexity. Ser-598 carries the post-translational modification Phosphoserine.

This sequence belongs to the DEAD box helicase family. DDX3/DED1 subfamily. Interacts with the L-A virus GAG protein and the whole L-A virus particles.

It localises to the cytoplasm. It carries out the reaction ATP + H2O = ADP + phosphate + H(+). In terms of biological role, ATP-binding RNA helicase involved in translation initiation. Remodels RNA in response to ADP and ATP concentrations by facilitating disruption, but also formation of RNA duplexes. Has weak ATP-dependent affinity for dsRNA, but strong ATP-dependent affinity for ssRNA. Acts as a virus host factor involved in the replication of the MBV and the L-A viruses by promoting the negative-strand RNA synthesis. May be involved in recognition of the preinitiation complex and DNA binding of the RNA polymerase III and play a role in mRNA splicing. The protein is ATP-dependent RNA helicase DED1 of Saccharomyces cerevisiae (strain ATCC 204508 / S288c) (Baker's yeast).